A 153-amino-acid polypeptide reads, in one-letter code: MKTFVLHIFIFALVAFASASRDSAKKIGSQYDNYETCLTEHGLTEDDVFSIGEVSSGQHKTNHEDTELHKNGCVMQCLLEKDGLMSGADYDEEKMREDYIKETGAQPGDQRIEALNACMQETKDMEDKCDKSLVLVACVLAAEAILADSSEAA.

An N-terminal signal peptide occupies residues 1 to 19 (MKTFVLHIFIFALVAFASA). Cystine bridges form between cysteine 37–cysteine 77, cysteine 73–cysteine 129, and cysteine 118–cysteine 138.

Belongs to the PBP/GOBP family. As to quaternary structure, homodimer.

The protein localises to the secreted. Colony queen number, a major feature of social organization, is associated with worker genotype for Gp-9. Colonies are headed by either a single reproductive queen (monogyne form) or multiple queens (polygyne form). Differences in worker Gp-9 genotypes between social forms may cause differences in workers' abilities to recognize queens and regulate their numbers. The polypeptide is Pheromone-binding protein Gp-9 (Solenopsis daguerrei (Workerless parasitic ant)).